Here is a 387-residue protein sequence, read N- to C-terminus: 3-ketoacyl-CoA thiolase (387 aa).

C91 functions as the Acyl-thioester intermediate in the catalytic mechanism. Active-site proton acceptor residues include H343 and C373.

The protein belongs to the thiolase-like superfamily. Thiolase family. As to quaternary structure, heterotetramer of two alpha chains (FadB) and two beta chains (FadA).

Its subcellular location is the cytoplasm. It carries out the reaction an acyl-CoA + acetyl-CoA = a 3-oxoacyl-CoA + CoA. The protein operates within lipid metabolism; fatty acid beta-oxidation. Catalyzes the final step of fatty acid oxidation in which acetyl-CoA is released and the CoA ester of a fatty acid two carbons shorter is formed. This is 3-ketoacyl-CoA thiolase from Escherichia coli (strain UTI89 / UPEC).